A 492-amino-acid polypeptide reads, in one-letter code: SH2 domain-containing adapter protein E (492 aa).

4 disordered regions span residues 46–193 (TASE…DKAK), 214–236 (KRTK…EPYD), 260–332 (LDGP…EQPW), and 347–384 (FEGS…KVDP). A Phosphoserine modification is found at Ser-103. Residues 149–158 (IKVDTQEKNG) show a composition bias toward basic and acidic residues. The span at 168 to 184 (TSSSSSSSSSASSSPSS) shows a compositional bias: low complexity. Composition is skewed to basic and acidic residues over residues 214–227 (KRTK…RVGE), 268–285 (ETVK…KDLL), 306–332 (AEVK…EQPW), 349–361 (GSDR…DAGR), and 373–383 (LSDHGDGEKVD). The 96-residue stretch at 393 to 488 (WYHGSISRAE…AEHMTLLHPV (96 aa)) folds into the SH2 domain.

In terms of tissue distribution, expressed in heart, brain, lung and skeletal muscle.

The protein is SH2 domain-containing adapter protein E (She) of Mus musculus (Mouse).